Reading from the N-terminus, the 246-residue chain is 3'(2'),5'-bisphosphate nucleotidase CysQ (246 aa).

Residues Glu-64, Asp-83, Leu-85, Asp-86, and Asp-205 each coordinate Mg(2+). Residue Glu-64 participates in substrate binding. Residues 85–88 (LDGT) and Asp-205 each bind substrate.

Belongs to the inositol monophosphatase superfamily. CysQ family. It depends on Mg(2+) as a cofactor.

It is found in the cell inner membrane. It carries out the reaction adenosine 3',5'-bisphosphate + H2O = AMP + phosphate. Inhibited by lithium and calcium. Its function is as follows. Converts adenosine-3',5'-bisphosphate (PAP) to AMP. May also convert adenosine 3'-phosphate 5'-phosphosulfate (PAPS) to adenosine 5'-phosphosulfate (APS). Has 10000-fold lower activity towards inositol 1,4-bisphosphate (Ins(1,4)P2). This is 3'(2'),5'-bisphosphate nucleotidase CysQ from Escherichia coli (strain K12).